Reading from the N-terminus, the 1579-residue chain is Eukaryotic translation initiation factor 4 gamma 3 (1579 aa).

Disordered regions lie at residues 1–35 (MNSQPQARSPFFQRPQIQPPRAAIPNSSPSIRPGV) and 128–326 (TQQQ…GPSL). Residues 10-25 (PFFQRPQIQPPRAAIP) show a composition bias toward low complexity. The segment covering 26-35 (NSSPSIRPGV) has biased composition (polar residues). The tract at residues 134–162 (PAKREKKTIRIRDPNQGGKDITEEIMSGG) is PABPC1-binding. Residues 167–183 (PTPPIGRPASTPTPPQQ) are compositionally biased toward pro residues. At Thr-168 the chain carries Phosphothreonine. Ser-230, Ser-232, and Ser-267 each carry phosphoserine. Residues 266–292 (SSPTSLPPLARSSLPSPMSAALSSQPL) are compositionally biased toward low complexity. Residues 295-308 (AEDKCELPSSKEED) show a composition bias toward basic and acidic residues. Positions 315 to 326 (PTSCTAASGPSL) are enriched in polar residues. A phosphoserine mark is found at Ser-436, Ser-470, Ser-472, and Ser-490. Positions 454–470 (RTCLSKDAKEMQDKAES) are enriched in basic and acidic residues. Disordered regions lie at residues 454–615 (RTCL…DTEG), 681–706 (RQTPGGRGVPLLNVGPRRSQPGQRRE), and 724–744 (AENAWKPSQKRDSHADDPESI). Over residues 471–480 (ESDGQAEETA) the composition is skewed to acidic residues. The segment covering 481-501 (DPQSLHSGRSPAPVQTATTAP) has biased composition (polar residues). 2 stretches are compositionally biased toward basic and acidic residues: residues 506 to 515 (KTKEQTRTPD) and 549 to 563 (SERDPSALKRGKAEE). Over residues 589-598 (SGSADSSADG) the composition is skewed to low complexity. Over residues 606-615 (ESWKPADTEG) the composition is skewed to basic and acidic residues. An EIF4E-binding region spans residues 614–625 (EGKKQYDREFLL). Residues 694–1014 (VGPRRSQPGQ…EQRKVQQLMT (321 aa)) are eIF3/EIF4A-binding. 5 HEAT repeats span residues 740–778 (DPESIKTQELFRKVRSILNKLTPQMFNQLMKQVSALTVD), 779–826 (TEER…GNTV), 827–900 (NFRK…LKML), 901–939 (TEAIMHDCVVKLLKNHDEESLECLCRLLTTIGKDLDFEK), and 940–979 (AKPRMDQYFNQMEKIVKERKTSSRIRFMLQDVIDLRLCNW). The MIF4G domain occupies 750-978 (FRKVRSILNK…QDVIDLRLCN (229 aa)). Over residues 855 to 871 (KELEAASAPEERTRLHD) the composition is skewed to basic and acidic residues. The tract at residues 855–875 (KELEAASAPEERTRLHDELEE) is disordered. Residues 989–1018 (KTIEQIHKEAKIEEQEEQRKVQQLMTKEKR) adopt a coiled-coil conformation. Disordered stretches follow at residues 1009-1037 (VQQLMTKEKRRPGVQRVDEGGWNTVQGAK) and 1067-1214 (LGSW…LSEE). Positions 1086–1098 (LRSSASSLNRFSP) are enriched in low complexity. Position 1150 is a phosphoserine; by CaMK1 (Ser-1150). 2 stretches are compositionally biased toward basic and acidic residues: residues 1150–1169 (SSKDLLDNQSQEEQRREMLE) and 1179–1197 (DAERASTEADRSKTRELAK). Residues 1154–1176 (LLDNQSQEEQRREMLETVKQLTG) are a coiled coil. At Ser-1212 the chain carries Phosphoserine. Residues 1215-1337 (EVERKSKSII…SMRELIVEFS (123 aa)) form the MI domain. The stretch at 1406 to 1438 (SSEALSKKELSAEELSQRLEKLIMEEKADDERI) forms a coiled coil. Residues 1410–1579 (LSKKELSAEE…REAEEESEDN (170 aa)) enclose the W2 domain. Residues 1427–1579 (LIMEEKADDE…REAEEESEDN (153 aa)) are EIF4A-binding. Positions 1565–1579 (FFTWLREAEEESEDN) are necessary but not sufficient for MKNK1-binding.

This sequence belongs to the eukaryotic initiation factor 4G family. In terms of assembly, interacts with EIF4A, EIF4E, eIF3 and PABPC1. Part of a complex with EIF4E. eIF4F is a multi-subunit complex, the composition of which varies with external and internal environmental conditions. It is composed of at least EIF4A, EIF4E and EIF4G1/EIF4G3. EIF4G1/EIF4G3 interacts through its C-terminus with the serine/threonine kinases MKNK1, and with MKNK2. Appears to act as a scaffold protein, holding these enzymes in place to phosphorylate eIF4E. Non-phosphorylated EIF4EBP1 competes with EIF4G1/EIFG3 to interact with EIF4E; insulin stimulated MAP-kinase (MAPK1 and MAPK3) phosphorylation of EIF4EBP1 causes dissociation of the complex allowing EIF4G1/EIF4G3 to bind and consequent initiation of translation. EIF4G1/EIF4G3 interacts with PABPC1 to bring about circularization of the mRNA. Interacts with FXR1; promoting translation of FXR1 target mRNAs.

In terms of biological role, component of the protein complex eIF4F, which is involved in the recognition of the mRNA cap, ATP-dependent unwinding of 5'-terminal secondary structure and recruitment of mRNA to the ribosome. Functional homolog of EIF4G1. In Mus musculus (Mouse), this protein is Eukaryotic translation initiation factor 4 gamma 3 (Eif4g3).